A 404-amino-acid polypeptide reads, in one-letter code: Caspase b (404 aa).

The propeptide occupies 1–171; sequence MEDITQLLSD…DIYTPRSGTQ (171 aa). The region spanning 8 to 80 is the Pyrin domain; sequence LSDVLEDLVE…LRKIKQNERA (73 aa). Residues His249 and Cys296 contribute to the active site. Residues 301 to 316 constitute a propeptide that is removed on maturation; sequence SSGVLAQDSVFASDSW.

Belongs to the peptidase C14A family. As to quaternary structure, upon direct LPS-binding, forms large homooligomers, resulting in its activation. These oligomers are often referred to as 'non-canonical inflammasomes'. Heterotetramer that consists of two anti-parallel arranged heterodimers, each one formed by a 20 kDa (p20) and a 10 kDa (p10) subunit. Interacts with caspa. Interacts with pycard; the interaction only occurs in the presence of nlrp1. Component of NLRP1 inflammasomes. Inflammasomes are supramolecular complexes that assemble in the cytosol in response to pathogens and other damage-associated signals and play critical roles in innate immunity and inflammation. The NLRP1 inflammasome is composed of the signal sensor nlrp1, and the adapter pycard (asc), which recruit effector pro-inflammatory caspases caspa and/or caspb. The interaction between nlrp1 and pycard is required for the sequential recruitment of caspa and then caspb. Caspa is preferentially recruited first and this causes the cleavage of pro-il1b into the midformed il1b. This is followed by the recruitment of caspb, which is activated and cleaves the midformed il1b resulting in il1b maturation. The two subunits are derived from the precursor sequence by an autocatalytic mechanism. In terms of tissue distribution, expressed in the spleen, kidney and liver, and highly expressed in the gills and gut.

It localises to the inflammasome. It is found in the cytoplasm. The enzyme catalyses Strict requirement for Asp at the P1 position. It has a preferred cleavage sequence of Tyr-Val-Ala-Asp-|- but also cleaves at Asp-Glu-Val-Asp-|-.. With respect to regulation, activated by homooligomerization induced by direct binding to cytosolic LPS. In terms of biological role, thiol protease which cleaves IL-1 beta (il1b), releasing the mature cytokine which is involved in a variety of inflammatory processes, and mediates apoptosis. Component of the NLRP1 inflammasome, which plays a crucial role in innate immunity and inflammation. In response to pathogens and other damage-associated signals, recruited to the NLRP1 inflammasome in its precursor form following the recruitment of caspase caspa. Its subsequent activation causes the cleavage of the midformed pro-il1b and results in il1b maturation and secretion in the extracellular milieu. Activated by direct binding to bacterial lipopolysaccharides (LPS), which causes non-canonical inflammasome activation and results in the pyroptosis of infected cells and their extrusion into the gut lumen, as well as in cytokine secretion. Plays a crucial role in the restriction of bacterial infection to intestinal sites. Pyroptosis limits bacterial replication, while cytokine secretion promotes the recruitment and activation of immune cells and triggers mucosal inflammation. Promotes pyroptosis by bacterial infection by E.piscicida. This chain is Caspase b, found in Danio rerio (Zebrafish).